The primary structure comprises 118 residues: Large ribosomal subunit protein uL18 (118 aa).

Belongs to the universal ribosomal protein uL18 family. In terms of assembly, part of the 50S ribosomal subunit; part of the 5S rRNA/L5/L18/L25 subcomplex. Contacts the 5S and 23S rRNAs.

Functionally, this is one of the proteins that bind and probably mediate the attachment of the 5S RNA into the large ribosomal subunit, where it forms part of the central protuberance. This is Large ribosomal subunit protein uL18 from Acidobacterium capsulatum (strain ATCC 51196 / DSM 11244 / BCRC 80197 / JCM 7670 / NBRC 15755 / NCIMB 13165 / 161).